The chain runs to 312 residues: MFFSVKNVFLLGIFGFVLGALAETSHLERLSLEAPYINHGMRNLWWEYGGSTVIDRKNGIFLTQDVQNQQGWISTRLPTPSSSFEVLFQFRINSESTSLFGDGLAFFLAAERAKPGPVFGFTDKFNGYGIFIDTYNNHRPGTLFPRVIVMKGDGHTPYDYENDGKANEIASCSALNVRGNDYNLGKLKYDKNAKKLRFEIAYQGSSSFIKCFDLNEVELPLTTFMSFSAHTGDLSESHEIASILSRTITDIDDEGTPEIPAEELKGTTYGQKKGSFKKRLIILLLSLIVIFSIFALRSYQVQQEKNRRTTVL.

The signal sequence occupies residues 1 to 22 (MFFSVKNVFLLGIFGFVLGALA). Residues 23 to 280 (ETSHLERLSL…QKKGSFKKRL (258 aa)) lie on the Extracellular side of the membrane. The region spanning 24-248 (TSHLERLSLE…EIASILSRTI (225 aa)) is the L-type lectin-like domain. The helical transmembrane segment at 281–301 (IILLLSLIVIFSIFALRSYQV) threads the bilayer. The Cytoplasmic segment spans residues 302 to 312 (QQEKNRRTTVL).

Its subcellular location is the membrane. It is found in the endoplasmic reticulum. The protein resides in the golgi apparatus. It localises to the vacuole. The sequence is that of L-type lectin-like domain-containing protein C126.08c from Schizosaccharomyces pombe (strain 972 / ATCC 24843) (Fission yeast).